Reading from the N-terminus, the 310-residue chain is MKTVKILDSHTGGEPTRLVLEGFPDLGTGDIESRRKILSEQYDHFRRATMLEPRGNDVLVGALLCKPVNPKASAGVIFFNNTGYLGMCGHGTIGLVASLAHLGKIQVGTHLIETPVGDVEATLHEDHSVSVRNVPAYRYKKAVEVNVEKYGKVTGDIAWGGNWFFLINDHGQRVASDNLDQLTEYAWTVRQALTAQGITGKDGQEIDHIELFASDTEADSKNFVLCPGKAYDRSPCGTGTSAKIACLAADGKLEPGKLWKQASIIGSQFIASYEQAGEYVIPTIRGEAYMSAEATLFMDENDPFAWGIQL.

Cysteine 88 acts as the Proton acceptor in catalysis. Substrate is bound by residues 89-90, histidine 208, and aspartate 232; that span reads GH. Residue cysteine 236 is the Proton donor of the active site. A substrate-binding site is contributed by 237 to 238; that stretch reads GT.

This sequence belongs to the proline racemase family.

It catalyses the reaction trans-4-hydroxy-L-proline = cis-4-hydroxy-D-proline. Functionally, catalyzes the epimerization of trans-4-hydroxy-L-proline (t4LHyp) to cis-4-hydroxy-D-proline (c4DHyp). Is likely involved in a degradation pathway that converts t4LHyp to alpha-ketoglutarate. Displays no proline racemase activity. This is 4-hydroxyproline 2-epimerase from Acinetobacter baumannii (strain AYE).